The chain runs to 465 residues: Hexokinase-4 (465 aa).

The Hexokinase domain maps to 10–454 (ATKKEKVEQI…SGRGAALVSA (445 aa)). The segment at 67–203 (EGSEVGDFLS…DFEMDVVAMV (137 aa)) is hexokinase small subdomain. Residue 78–83 (DLGGTN) participates in ATP binding. Substrate-binding positions include 151–152 (SF), 168–169 (TK), and 204–205 (ND). A hexokinase large subdomain region spans residues 204–443 (NDTVATMISC…CEITFIESEE (240 aa)). ATP is bound at residue Thr-228. Substrate is bound by residues Asn-231, Glu-256, and Glu-290. ATP contacts are provided by residues 295-296 (GK), 332-336 (TRFVS), and 411-415 (SVYKL).

It belongs to the hexokinase family. In terms of assembly, monomer. Interacts with MIDN; the interaction occurs preferentially at low glucose levels and results in inhibition of hexokinase activity. Interacts with GCKR; leading to sequestration in the nucleus.

The protein resides in the cytoplasm. It is found in the nucleus. Its subcellular location is the mitochondrion. It catalyses the reaction a D-hexose + ATP = a D-hexose 6-phosphate + ADP + H(+). The enzyme catalyses D-fructose + ATP = D-fructose 6-phosphate + ADP + H(+). The catalysed reaction is D-glucose + ATP = D-glucose 6-phosphate + ADP + H(+). It carries out the reaction D-mannose + ATP = D-mannose 6-phosphate + ADP + H(+). Its pathway is carbohydrate metabolism; hexose metabolism. It participates in carbohydrate degradation; glycolysis; D-glyceraldehyde 3-phosphate and glycerone phosphate from D-glucose: step 1/4. Subject to allosteric regulation. Low glucose and high fructose-6-phosphate triggers association with the inhibitor GCKR followed by sequestration in the nucleus. Functionally, catalyzes the phosphorylation of hexose, such as D-glucose, D-fructose and D-mannose, to hexose 6-phosphate (D-glucose 6-phosphate, D-fructose 6-phosphate and D-mannose 6-phosphate, respectively). Compared to other hexokinases, has a weak affinity for D-glucose, and is effective only when glucose is abundant. Mainly expressed in pancreatic beta cells and the liver and constitutes a rate-limiting step in glucose metabolism in these tissues. Since insulin secretion parallels glucose metabolism and the low glucose affinity of GCK ensures that it can change its enzymatic activity within the physiological range of glucose concentrations, GCK acts as a glucose sensor in the pancreatic beta cell. In pancreas, plays an important role in modulating insulin secretion. In liver, helps to facilitate the uptake and conversion of glucose by acting as an insulin-sensitive determinant of hepatic glucose usage. Required to provide D-glucose 6-phosphate for the synthesis of glycogen. Mediates the initial step of glycolysis by catalyzing phosphorylation of D-glucose to D-glucose 6-phosphate. The protein is Hexokinase-4 of Mus musculus (Mouse).